A 283-amino-acid chain; its full sequence is Light-independent protochlorophyllide reductase iron-sulfur ATP-binding protein (283 aa).

Residues 15–20 and K44 contribute to the ATP site; that span reads GIGKST. S19 serves as a coordination point for Mg(2+). [4Fe-4S] cluster contacts are provided by C100 and C134. 185–186 serves as a coordination point for ATP; that stretch reads NR.

Belongs to the NifH/BchL/ChlL family. In terms of assembly, homodimer. Protochlorophyllide reductase is composed of three subunits; ChlL, ChlN and ChlB. Requires [4Fe-4S] cluster as cofactor.

It catalyses the reaction chlorophyllide a + oxidized 2[4Fe-4S]-[ferredoxin] + 2 ADP + 2 phosphate = protochlorophyllide a + reduced 2[4Fe-4S]-[ferredoxin] + 2 ATP + 2 H2O. Its pathway is porphyrin-containing compound metabolism; chlorophyll biosynthesis (light-independent). Component of the dark-operative protochlorophyllide reductase (DPOR) that uses Mg-ATP and reduced ferredoxin to reduce ring D of protochlorophyllide (Pchlide) to form chlorophyllide a (Chlide). This reaction is light-independent. The L component serves as a unique electron donor to the NB-component of the complex, and binds Mg-ATP. The protein is Light-independent protochlorophyllide reductase iron-sulfur ATP-binding protein of Synechococcus sp. (strain JA-2-3B'a(2-13)) (Cyanobacteria bacterium Yellowstone B-Prime).